A 103-amino-acid polypeptide reads, in one-letter code: MVKSLHCLIGIVLFLAILNAGNGFTLDRSASIERQEDSWPKISLFHGNQRKNDLKKSVSPTWNKLSRCPVYLPTKSDTIRVVQIKGYFAEKKQTIITSYCIIK.

The first 23 residues, 1 to 23 (MVKSLHCLIGIVLFLAILNAGNG), serve as a signal peptide directing secretion.

Belongs to the scoloptoxin-24 family. Post-translationally, contains 1 disulfide bond. As to expression, expressed by the venom gland.

The protein resides in the secreted. In Ethmostigmus rubripes (Giant centipede), this protein is U-scoloptoxin(24)-Er1a.